Consider the following 538-residue polypeptide: Putative outer membrane porin BglH (538 aa).

An N-terminal signal peptide occupies residues 1-25 (MFRRNLITSAILLMAPLAFSAQSLA). Positions 52–82 (KDEEKKKYTPATVNRSVSTNDQGYAANPFPT) are disordered. Residues 62–73 (ATVNRSVSTNDQ) are compositionally biased toward polar residues.

Belongs to the porin LamB (TC 1.B.3) family.

It localises to the cell outer membrane. May be a sugar porin with a broad carbohydrate specificity. This chain is Putative outer membrane porin BglH (bglH), found in Shigella sonnei (strain Ss046).